The chain runs to 301 residues: uncharacterized protein (301 aa).

Positions 45–286 constitute a Radical SAM core domain; sequence KELSDGWALN…EELGKMFTEL (242 aa).

This is an uncharacterized protein from Acidianus two-tailed virus (ATV).